Reading from the N-terminus, the 372-residue chain is Serine protease inhibitor 42Dd (372 aa).

The N-terminal stretch at 1–15 (MYYLCIFLWVTSVAC) is a signal peptide. Residues Asn-197 and Asn-232 are each glycosylated (N-linked (GlcNAc...) asparagine).

It belongs to the serpin family. As to expression, expressed in the ovary.

It localises to the secreted. Its function is as follows. Serine protease inhibitor with activity toward trypsin. Involved in innate immunity to fungal infection by negatively regulating the Toll signaling pathway and suppressing the expression of the antifungal peptide drosomycin. Acts upstream of SPE and grass, and downstream of the fungal cell wall pattern recognition receptor GNBP3. May function specifically in the GNBP3-dependent beta-1,3-glucan branch of the Toll pathway. The protein is Serine protease inhibitor 42Dd of Drosophila melanogaster (Fruit fly).